The following is a 447-amino-acid chain: Gustatory receptor family protein 3 (447 aa).

Topologically, residues 1–69 are extracellular; that stretch reads MTITASNTLE…HTHSSARNTM (69 aa). Residues 70 to 90 form a helical membrane-spanning segment; sequence FKWPLTIYNYLTLAILTAATI. Over 91-116 the chain is Cytoplasmic; that stretch reads RRISQIKQKSATNEEKDAAFHVLNPT. A helical membrane pass occupies residues 117 to 137; sequence FVLTLCHALLMFSGLAAGFLL. Residues 138-171 are Extracellular-facing; sequence LKLQKQREKMYHVLDQGLGRNRNEEHDSHHFKLN. The helical transmembrane segment at 172–192 threads the bilayer; the sequence is KLFISISFSFAAALSFVQIAT. Topologically, residues 193–211 are cytoplasmic; it reads KMRYLDLPDTPDLINRKIY. Residues 212-232 traverse the membrane as a helical segment; sequence FVILEGYVIFIASSCISLVAI. Residues 233–292 lie on the Extracellular side of the membrane; it reads LFFQLCRILQFSIGQLIEEMVPKEKEECPLPEQSLQQIHDVQIHYQEISNAKLYIEQNFS. The helical transmembrane segment at 293-313 threads the bilayer; sequence FSLFYTYGCCIPLTCLLGYIA. The Cytoplasmic segment spans residues 314 to 328; it reads FRNGIQADMAETFSV. The chain crosses the membrane as a helical span at residues 329–349; sequence AIWLTNTMLALMLFSIPAFMI. Topologically, residues 350–405 are extracellular; the sequence is AEEGDKLLTASFKMYHETLCEERDLLVLSQMSFLSFQMHATKLTLTAGNFFMMNRK. Residues 406–426 traverse the membrane as a helical segment; that stretch reads IMISLFSAIFTYFLILVQFDA. Over 427–447 the chain is Cytoplasmic; that stretch reads EKERAGECNNQSRVLIVQPPV.

This sequence belongs to the insect chemoreceptor superfamily. Gustatory receptor (GR) family. In terms of tissue distribution, expressed in I2 pharyngeal neurons.

The protein localises to the membrane. In terms of biological role, chemoreceptor involved in light-induced avoidance behavior. Probably acts as a molecular sensor in I2 pharyngeal neurons, required for the inhibition of feeding in response to light and hydrogen peroxide. Involved in circadian rhythms, probably by acting as a light sensor. In contrast to lite-1, does not act as a photoreceptor. This Caenorhabditis elegans protein is Gustatory receptor family protein 3.